Here is a 384-residue protein sequence, read N- to C-terminus: tRNA-specific 2-thiouridylase MnmA (384 aa).

ATP is bound by residues 21-28 and methionine 47; that span reads GMSGGVDS. Residues 107-109 form an interaction with target base in tRNA region; sequence NPD. Cysteine 112 serves as the catalytic Nucleophile. A disulfide bridge connects residues cysteine 112 and cysteine 208. Glycine 136 is a binding site for ATP. The interval 158 to 160 is interaction with tRNA; the sequence is KDQ. The Cysteine persulfide intermediate role is filled by cysteine 208. The segment at 320-321 is interaction with tRNA; the sequence is RY.

It belongs to the MnmA/TRMU family.

Its subcellular location is the cytoplasm. The enzyme catalyses S-sulfanyl-L-cysteinyl-[protein] + uridine(34) in tRNA + AH2 + ATP = 2-thiouridine(34) in tRNA + L-cysteinyl-[protein] + A + AMP + diphosphate + H(+). Functionally, catalyzes the 2-thiolation of uridine at the wobble position (U34) of tRNA, leading to the formation of s(2)U34. In Chromohalobacter salexigens (strain ATCC BAA-138 / DSM 3043 / CIP 106854 / NCIMB 13768 / 1H11), this protein is tRNA-specific 2-thiouridylase MnmA.